The sequence spans 310 residues: Translocator protein BipD (310 aa).

Coiled-coil stretches lie at residues 127 to 171 (DPIL…LQDY) and 250 to 299 (DTAR…AIST).

This sequence belongs to the invasin protein D family.

The protein resides in the secreted. Required for invasion of epithelial cells, as well as for survival within host cells, escape from endocytic vesicles and subsequent actin-tail formation. Probably regulates the secretion of effectors BipB and BipC and their final integration into the target cell membrane. This Burkholderia pseudomallei (strain 1106a) protein is Translocator protein BipD (bipD).